The primary structure comprises 251 residues: HTH-type transcriptional regulator UlaR (251 aa).

The HTH deoR-type domain maps to 3–58 (EAQRHQILLEMLAQLGFVTVEKVVERLGISPATARRDINKLDERGKLKKVRNGAEA). The H-T-H motif DNA-binding region spans 20–39 (VTVEKVVERLGISPATARRD).

It localises to the cytoplasm. Its function is as follows. Represses ulaG and the ulaABCDEF operon. This is HTH-type transcriptional regulator UlaR from Shigella sonnei (strain Ss046).